The following is a 302-amino-acid chain: D-alanine--D-alanine ligase (302 aa).

The 195-residue stretch at 100 to 294 folds into the ATP-grasp domain; the sequence is KALFRREGLL…FPELVEKLIQ (195 aa). 127-180 is an ATP binding site; that stretch reads GLNYPIFVKSNIGGSSVNVHLVTNYEELFIAMEALFNAGEEVLLEEAIIGQEVT. Mg(2+) is bound by residues D248, E261, and N263.

The protein belongs to the D-alanine--D-alanine ligase family. It depends on Mg(2+) as a cofactor. Requires Mn(2+) as cofactor.

It is found in the cytoplasm. It carries out the reaction 2 D-alanine + ATP = D-alanyl-D-alanine + ADP + phosphate + H(+). The protein operates within cell wall biogenesis; peptidoglycan biosynthesis. Functionally, cell wall formation. The polypeptide is D-alanine--D-alanine ligase (Lawsonia intracellularis (strain PHE/MN1-00)).